A 376-amino-acid polypeptide reads, in one-letter code: Chaperone protein DnaJ (376 aa).

The 66-residue stretch at 5–70 (DYYEVLGVGR…DKKAAYDQFG (66 aa)) folds into the J domain. Residues 132-210 (GLTKELRIPT…CHGEGRVEKS (79 aa)) form a CR-type zinc finger. Zn(2+)-binding residues include C145, C148, C162, C165, C184, C187, C198, and C201. CXXCXGXG motif repeat units lie at residues 145 to 152 (CDSCDGSG), 162 to 169 (CGTCHGQG), 184 to 191 (CPTCHGRG), and 198 to 205 (CNKCHGEG).

Belongs to the DnaJ family. As to quaternary structure, homodimer. Requires Zn(2+) as cofactor.

Its subcellular location is the cytoplasm. Its function is as follows. Participates actively in the response to hyperosmotic and heat shock by preventing the aggregation of stress-denatured proteins and by disaggregating proteins, also in an autonomous, DnaK-independent fashion. Unfolded proteins bind initially to DnaJ; upon interaction with the DnaJ-bound protein, DnaK hydrolyzes its bound ATP, resulting in the formation of a stable complex. GrpE releases ADP from DnaK; ATP binding to DnaK triggers the release of the substrate protein, thus completing the reaction cycle. Several rounds of ATP-dependent interactions between DnaJ, DnaK and GrpE are required for fully efficient folding. Also involved, together with DnaK and GrpE, in the DNA replication of plasmids through activation of initiation proteins. The chain is Chaperone protein DnaJ from Shewanella pealeana (strain ATCC 700345 / ANG-SQ1).